The chain runs to 650 residues: Threonine--tRNA ligase (650 aa).

Positions 1 to 66 constitute a TGS domain; that stretch reads MVQITLPDGS…DQDAKLAIVT (66 aa). The tract at residues 247–538 is catalytic; that stretch reads DHRKIGRDLD…LIENHAGAMP (292 aa). Zn(2+) contacts are provided by Cys338, His389, and His515.

It belongs to the class-II aminoacyl-tRNA synthetase family. As to quaternary structure, homodimer. The cofactor is Zn(2+).

Its subcellular location is the cytoplasm. It carries out the reaction tRNA(Thr) + L-threonine + ATP = L-threonyl-tRNA(Thr) + AMP + diphosphate + H(+). In terms of biological role, catalyzes the attachment of threonine to tRNA(Thr) in a two-step reaction: L-threonine is first activated by ATP to form Thr-AMP and then transferred to the acceptor end of tRNA(Thr). Also edits incorrectly charged L-seryl-tRNA(Thr). The sequence is that of Threonine--tRNA ligase from Bordetella avium (strain 197N).